A 139-amino-acid polypeptide reads, in one-letter code: NADPH-dependent 7-cyano-7-deazaguanine reductase (139 aa).

Cys34 functions as the Thioimide intermediate in the catalytic mechanism. Asp41 acts as the Proton donor in catalysis. Substrate contacts are provided by residues 56–58 (VEL) and 75–76 (HE).

Belongs to the GTP cyclohydrolase I family. QueF type 1 subfamily.

The protein resides in the cytoplasm. It catalyses the reaction 7-aminomethyl-7-carbaguanine + 2 NADP(+) = 7-cyano-7-deazaguanine + 2 NADPH + 3 H(+). It participates in tRNA modification; tRNA-queuosine biosynthesis. Functionally, catalyzes the NADPH-dependent reduction of 7-cyano-7-deazaguanine (preQ0) to 7-aminomethyl-7-deazaguanine (preQ1). The sequence is that of NADPH-dependent 7-cyano-7-deazaguanine reductase from Methylobacillus flagellatus (strain ATCC 51484 / DSM 6875 / VKM B-1610 / KT).